Here is a 283-residue protein sequence, read N- to C-terminus: Urease accessory protein UreD (283 aa).

The interval 1–21 (MTQTQPVGTLRLTIDDQGPQG) is disordered.

Belongs to the UreD family. UreD, UreF and UreG form a complex that acts as a GTP-hydrolysis-dependent molecular chaperone, activating the urease apoprotein by helping to assemble the nickel containing metallocenter of UreC. The UreE protein probably delivers the nickel.

It localises to the cytoplasm. Probably acts in the maturation of urease via the functional incorporation of the urease nickel metallocenter. Required for urease expression. The polypeptide is Urease accessory protein UreD (Corynebacterium glutamicum (strain ATCC 13032 / DSM 20300 / JCM 1318 / BCRC 11384 / CCUG 27702 / LMG 3730 / NBRC 12168 / NCIMB 10025 / NRRL B-2784 / 534)).